Reading from the N-terminus, the 366-residue chain is Probable dual-specificity RNA methyltransferase RlmN (366 aa).

Glu108 acts as the Proton acceptor in catalysis. The Radical SAM core domain maps to 114-352; sequence YSDRSTLCIS…CTVRDTKGQE (239 aa). The cysteines at positions 121 and 357 are disulfide-linked. The [4Fe-4S] cluster site is built by Cys128, Cys132, and Cys135. Residues 178-179, Ser212, 235-237, and Asn314 each bind S-adenosyl-L-methionine; these read GE and SLH. The active-site S-methylcysteine intermediate is the Cys357.

The protein belongs to the radical SAM superfamily. RlmN family. [4Fe-4S] cluster is required as a cofactor.

Its subcellular location is the cytoplasm. It catalyses the reaction adenosine(2503) in 23S rRNA + 2 reduced [2Fe-2S]-[ferredoxin] + 2 S-adenosyl-L-methionine = 2-methyladenosine(2503) in 23S rRNA + 5'-deoxyadenosine + L-methionine + 2 oxidized [2Fe-2S]-[ferredoxin] + S-adenosyl-L-homocysteine. The enzyme catalyses adenosine(37) in tRNA + 2 reduced [2Fe-2S]-[ferredoxin] + 2 S-adenosyl-L-methionine = 2-methyladenosine(37) in tRNA + 5'-deoxyadenosine + L-methionine + 2 oxidized [2Fe-2S]-[ferredoxin] + S-adenosyl-L-homocysteine. In terms of biological role, specifically methylates position 2 of adenine 2503 in 23S rRNA and position 2 of adenine 37 in tRNAs. This is Probable dual-specificity RNA methyltransferase RlmN from Corynebacterium glutamicum (strain ATCC 13032 / DSM 20300 / JCM 1318 / BCRC 11384 / CCUG 27702 / LMG 3730 / NBRC 12168 / NCIMB 10025 / NRRL B-2784 / 534).